We begin with the raw amino-acid sequence, 310 residues long: MTQEPLIAIVGPTAVGKTALGIELAKTFGAEIISGDSMQVYRTMDIGTAKATVEEMAGIPHHLIDILEPGDTWTVSMFQEKALLAIASIRSRGKWPLLVGGTGLYVQALTHELSFGDAPSDSSFREEMELYASRFGNAALHGKLAKADPNAAEAIHANNVRRVIRALEVIHLTGKPFSEQENGLARPRFDNVLIGLEMERQALYERINRRVDAMMEAGLLEEVHRLYQRGIQGQAIQAIGYKELYAYFDGKCTYDEAIEALKTNSRRYAKRQLTWFKNRSDAVWFHLEEPEAKAKIFDYVHAFLAGKGFA.

An ATP-binding site is contributed by 11–18; that stretch reads GPTAVGKT. 13 to 18 is a binding site for substrate; it reads TAVGKT. The interval 36–39 is interaction with substrate tRNA; it reads DSMQ.

Belongs to the IPP transferase family. Monomer. Mg(2+) serves as cofactor.

The enzyme catalyses adenosine(37) in tRNA + dimethylallyl diphosphate = N(6)-dimethylallyladenosine(37) in tRNA + diphosphate. Functionally, catalyzes the transfer of a dimethylallyl group onto the adenine at position 37 in tRNAs that read codons beginning with uridine, leading to the formation of N6-(dimethylallyl)adenosine (i(6)A). This chain is tRNA dimethylallyltransferase, found in Shouchella clausii (strain KSM-K16) (Alkalihalobacillus clausii).